Reading from the N-terminus, the 346-residue chain is D-alanine--D-alanine ligase (346 aa).

The region spanning 133–327 (KLYAKSVGVK…TLADQIPLEK (195 aa)) is the ATP-grasp domain. An ATP-binding site is contributed by 159–211 (LRFPCIIKPARLGSSIGISIVKDEKDLEYAKDVGFEFDNDLVVEEFKNNIKEY). 3 residues coordinate Mg(2+): aspartate 284, glutamate 296, and asparagine 298.

It belongs to the D-alanine--D-alanine ligase family. Requires Mg(2+) as cofactor. It depends on Mn(2+) as a cofactor.

Its subcellular location is the cytoplasm. The catalysed reaction is 2 D-alanine + ATP = D-alanyl-D-alanine + ADP + phosphate + H(+). The protein operates within cell wall biogenesis; peptidoglycan biosynthesis. Cell wall formation. This is D-alanine--D-alanine ligase from Campylobacter jejuni subsp. doylei (strain ATCC BAA-1458 / RM4099 / 269.97).